The chain runs to 385 residues: 4-hydroxy-3-methylbut-2-en-1-yl diphosphate synthase (flavodoxin) (385 aa).

The [4Fe-4S] cluster site is built by C282, C285, C317, and E324.

This sequence belongs to the IspG family. [4Fe-4S] cluster is required as a cofactor.

The enzyme catalyses (2E)-4-hydroxy-3-methylbut-2-enyl diphosphate + oxidized [flavodoxin] + H2O + 2 H(+) = 2-C-methyl-D-erythritol 2,4-cyclic diphosphate + reduced [flavodoxin]. The protein operates within isoprenoid biosynthesis; isopentenyl diphosphate biosynthesis via DXP pathway; isopentenyl diphosphate from 1-deoxy-D-xylulose 5-phosphate: step 5/6. In terms of biological role, converts 2C-methyl-D-erythritol 2,4-cyclodiphosphate (ME-2,4cPP) into 1-hydroxy-2-methyl-2-(E)-butenyl 4-diphosphate. The chain is 4-hydroxy-3-methylbut-2-en-1-yl diphosphate synthase (flavodoxin) from Nocardia farcinica (strain IFM 10152).